The primary structure comprises 340 residues: Anthranilate phosphoribosyltransferase (340 aa).

5-phospho-alpha-D-ribose 1-diphosphate-binding positions include Gly-78, 81-82 (GD), Thr-86, 88-91 (NIST), 106-114 (KHGNRSVSS), and Ser-118. Gly-78 is an anthranilate binding site. Ser-90 contributes to the Mg(2+) binding site. Position 109 (Asn-109) interacts with anthranilate. Arg-164 is an anthranilate binding site. Mg(2+)-binding residues include Asp-223 and Glu-224.

It belongs to the anthranilate phosphoribosyltransferase family. As to quaternary structure, homodimer. It depends on Mg(2+) as a cofactor.

The catalysed reaction is N-(5-phospho-beta-D-ribosyl)anthranilate + diphosphate = 5-phospho-alpha-D-ribose 1-diphosphate + anthranilate. It functions in the pathway amino-acid biosynthesis; L-tryptophan biosynthesis; L-tryptophan from chorismate: step 2/5. In terms of biological role, catalyzes the transfer of the phosphoribosyl group of 5-phosphorylribose-1-pyrophosphate (PRPP) to anthranilate to yield N-(5'-phosphoribosyl)-anthranilate (PRA). This is Anthranilate phosphoribosyltransferase from Bacillus pumilus (Bacillus mesentericus).